The sequence spans 855 residues: Sucrose synthase 5 (855 aa).

Positions 279–758 (SIFNIVIFSI…GLQRICECYT (480 aa)) are GT-B glycosyltransferase.

It belongs to the glycosyltransferase 1 family. Plant sucrose synthase subfamily. As to expression, predominantly expressed in roots, flowers and immature seeds.

The protein localises to the cytoplasm. It is found in the membrane. The enzyme catalyses an NDP-alpha-D-glucose + D-fructose = a ribonucleoside 5'-diphosphate + sucrose + H(+). Sucrose-cleaving enzyme that provides UDP-glucose and fructose for various metabolic pathways. This is Sucrose synthase 5 (SUS5) from Oryza sativa subsp. japonica (Rice).